The chain runs to 675 residues: DNA ligase (675 aa).

Residues D36–D40, S85–L86, and E117 contribute to the NAD(+) site. The active-site N6-AMP-lysine intermediate is K119. Residues R140, E177, K294, and K318 each contribute to the NAD(+) site. Residues C412, C415, C430, and C436 each contribute to the Zn(2+) site. The 79-residue stretch at A597–E675 folds into the BRCT domain.

It belongs to the NAD-dependent DNA ligase family. LigA subfamily. Mg(2+) is required as a cofactor. Requires Mn(2+) as cofactor.

The enzyme catalyses NAD(+) + (deoxyribonucleotide)n-3'-hydroxyl + 5'-phospho-(deoxyribonucleotide)m = (deoxyribonucleotide)n+m + AMP + beta-nicotinamide D-nucleotide.. Its function is as follows. DNA ligase that catalyzes the formation of phosphodiester linkages between 5'-phosphoryl and 3'-hydroxyl groups in double-stranded DNA using NAD as a coenzyme and as the energy source for the reaction. It is essential for DNA replication and repair of damaged DNA. This is DNA ligase from Thioalkalivibrio sulfidiphilus (strain HL-EbGR7).